Here is a 619-residue protein sequence, read N- to C-terminus: 2-succinyl-5-enolpyruvyl-6-hydroxy-3-cyclohexene-1-carboxylate synthase (619 aa).

Polar residues predominate over residues 385–398 (SSAHQSLAATNSDS). The interval 385–415 (SSAHQSLAATNSDSSTDDIIENTDEEGSNES) is disordered. Positions 399 to 413 (STDDIIENTDEEGSN) are enriched in acidic residues.

Belongs to the TPP enzyme family. MenD subfamily. In terms of assembly, homodimer. Mg(2+) serves as cofactor. Mn(2+) is required as a cofactor. The cofactor is thiamine diphosphate.

The enzyme catalyses isochorismate + 2-oxoglutarate + H(+) = 5-enolpyruvoyl-6-hydroxy-2-succinyl-cyclohex-3-ene-1-carboxylate + CO2. Its pathway is quinol/quinone metabolism; 1,4-dihydroxy-2-naphthoate biosynthesis; 1,4-dihydroxy-2-naphthoate from chorismate: step 2/7. The protein operates within quinol/quinone metabolism; menaquinone biosynthesis. Catalyzes the thiamine diphosphate-dependent decarboxylation of 2-oxoglutarate and the subsequent addition of the resulting succinic semialdehyde-thiamine pyrophosphate anion to isochorismate to yield 2-succinyl-5-enolpyruvyl-6-hydroxy-3-cyclohexene-1-carboxylate (SEPHCHC). The sequence is that of 2-succinyl-5-enolpyruvyl-6-hydroxy-3-cyclohexene-1-carboxylate synthase from Haloquadratum walsbyi (strain DSM 16790 / HBSQ001).